The following is a 262-amino-acid chain: 5-methyltetrahydrofolate:corrinoid/iron-sulfur protein co-methyltransferase (262 aa).

One can recognise a Pterin-binding domain in the interval 1–246 (MLIIGERING…ETAATAEILL (246 aa)). (6S)-5-methyl-5,6,7,8-tetrahydrofolate-binding residues include N96 and D160. K184 lines the Ca(2+) pocket. (6S)-5-methyl-5,6,7,8-tetrahydrofolate contacts are provided by N199, Q202, and R207. 202–203 (QN) contacts methylcob(III)alamin. Ca(2+) contacts are provided by G222 and D224.

It belongs to the vitamin-B12 dependent methionine synthase family. In terms of assembly, heterohexamer composed of 2 subunits of AcsC, 2 subunits of AcsD and 2 subunits of AcsE. Ca(2+) is required as a cofactor.

It catalyses the reaction methyl-Co(III)-[corrinoid Fe-S protein] + (6S)-5,6,7,8-tetrahydrofolate = Co(I)-[corrinoid Fe-S protein] + (6S)-5-methyl-5,6,7,8-tetrahydrofolate + H(+). Its function is as follows. Methyltransferase that mediates the transfer of a N5-methyl group of (6S)-methyltetrahydrofolate to the 5-methoxybenzimidazolylcobamide cofactor of a corrinoid/Fe-S protein (AcsC/AcsD) in the anaerobic acetyl-CoA pathway (Wood-Ljungdahl pathway) of carbon monoxide and carbon dioxide fixation. The sequence is that of 5-methyltetrahydrofolate:corrinoid/iron-sulfur protein co-methyltransferase (acsE) from Moorella thermoacetica (Clostridium thermoaceticum).